A 104-amino-acid chain; its full sequence is Urease subunit beta (104 aa).

The protein belongs to the urease beta subunit family. In terms of assembly, heterotrimer of UreA (gamma), UreB (beta) and UreC (alpha) subunits. Three heterotrimers associate to form the active enzyme.

The protein localises to the cytoplasm. It carries out the reaction urea + 2 H2O + H(+) = hydrogencarbonate + 2 NH4(+). It functions in the pathway nitrogen metabolism; urea degradation; CO(2) and NH(3) from urea (urease route): step 1/1. In Synechococcus sp. (strain RCC307), this protein is Urease subunit beta.